Consider the following 524-residue polypeptide: Lysine--tRNA ligase (524 aa).

Residues 39–47 (ASGIPHMGS) carry the 'HIGH' region motif. The 'KMSKS' region signature appears at 294–298 (KISKS). Residue lysine 297 coordinates ATP.

It belongs to the class-I aminoacyl-tRNA synthetase family.

It localises to the cytoplasm. The enzyme catalyses tRNA(Lys) + L-lysine + ATP = L-lysyl-tRNA(Lys) + AMP + diphosphate. In Cenarchaeum symbiosum, this protein is Lysine--tRNA ligase (lysS).